The sequence spans 350 residues: UDP-N-acetylenolpyruvoylglucosamine reductase (350 aa).

Residues 24-195 form the FAD-binding PCMH-type domain; the sequence is HVEATARWLL…VAVEFNLPLL (172 aa). The active site involves Arg-172. Ser-245 serves as the catalytic Proton donor. Glu-342 is a catalytic residue.

The protein belongs to the MurB family. It depends on FAD as a cofactor.

The protein resides in the cytoplasm. The catalysed reaction is UDP-N-acetyl-alpha-D-muramate + NADP(+) = UDP-N-acetyl-3-O-(1-carboxyvinyl)-alpha-D-glucosamine + NADPH + H(+). It functions in the pathway cell wall biogenesis; peptidoglycan biosynthesis. Cell wall formation. The sequence is that of UDP-N-acetylenolpyruvoylglucosamine reductase from Xanthomonas oryzae pv. oryzae (strain MAFF 311018).